The following is a 539-amino-acid chain: Probable protein kinase UbiB (539 aa).

Positions 125-493 (RFDVEPLASA…RRRQGDRWAL (369 aa)) constitute a Protein kinase domain. ATP is bound by residues 131-139 (LASASVAQV) and lysine 153. The active-site Proton acceptor is the aspartate 288. A run of 2 helical transmembrane segments spans residues 495 to 515 (LLGA…AEAA) and 517 to 537 (LAAP…YLIV).

This sequence belongs to the ABC1 family. UbiB subfamily.

It is found in the cell inner membrane. It functions in the pathway cofactor biosynthesis; ubiquinone biosynthesis [regulation]. In terms of biological role, is probably a protein kinase regulator of UbiI activity which is involved in aerobic coenzyme Q (ubiquinone) biosynthesis. This Pseudomonas putida (strain W619) protein is Probable protein kinase UbiB.